The following is a 130-amino-acid chain: Methylglyoxal synthase (130 aa).

An MGS-like domain is found at 1-130 (MSKPRIALIA…DLARNMQDVC (130 aa)). Substrate contacts are provided by residues H11, K15, 37 to 40 (TGTT), and 57 to 58 (SG). The active-site Proton donor/acceptor is the D63. A substrate-binding site is contributed by H90.

This sequence belongs to the methylglyoxal synthase family.

It catalyses the reaction dihydroxyacetone phosphate = methylglyoxal + phosphate. In terms of biological role, catalyzes the formation of methylglyoxal from dihydroxyacetone phosphate. This Burkholderia lata (strain ATCC 17760 / DSM 23089 / LMG 22485 / NCIMB 9086 / R18194 / 383) protein is Methylglyoxal synthase.